A 125-amino-acid polypeptide reads, in one-letter code: Small ribosomal subunit protein uS12 (125 aa).

The tract at residues 9–31 (RQGREVEKIKSKSPAMENSPQRR) is disordered. D89 carries the 3-methylthioaspartic acid modification.

The protein belongs to the universal ribosomal protein uS12 family. As to quaternary structure, part of the 30S ribosomal subunit. Contacts proteins S8 and S17. May interact with IF1 in the 30S initiation complex.

Functionally, with S4 and S5 plays an important role in translational accuracy. In terms of biological role, interacts with and stabilizes bases of the 16S rRNA that are involved in tRNA selection in the A site and with the mRNA backbone. Located at the interface of the 30S and 50S subunits, it traverses the body of the 30S subunit contacting proteins on the other side and probably holding the rRNA structure together. The combined cluster of proteins S8, S12 and S17 appears to hold together the shoulder and platform of the 30S subunit. In Verminephrobacter eiseniae (strain EF01-2), this protein is Small ribosomal subunit protein uS12.